Consider the following 393-residue polypeptide: DNA primase large subunit PriL (393 aa).

4 residues coordinate [4Fe-4S] cluster: C230, C339, C350, and C356.

It belongs to the eukaryotic-type primase large subunit family. Heterodimer of a small subunit (PriS) and a large subunit (PriL). Requires [4Fe-4S] cluster as cofactor.

Regulatory subunit of DNA primase, an RNA polymerase that catalyzes the synthesis of short RNA molecules used as primers for DNA polymerase during DNA replication. Stabilizes and modulates the activity of the small subunit, increasing the rate of DNA synthesis, and conferring RNA synthesis capability. The DNA polymerase activity may enable DNA primase to also catalyze primer extension after primer synthesis. May also play a role in DNA repair. Displays gap-filling and strand-displacement activities. In Pyrococcus abyssi (strain GE5 / Orsay), this protein is DNA primase large subunit PriL.